A 687-amino-acid chain; its full sequence is Putative metabolite transport protein YDL199C (687 aa).

A disordered region spans residues Met1–Ala22. At Met1–Ser122 the chain is on the extracellular side. Residues Met7–Ala22 are compositionally biased toward polar residues. Ser90 is modified (phosphoserine). A helical membrane pass occupies residues Phe123–Gly143. Topologically, residues Asn144–Asn164 are cytoplasmic. Residues Ile165–Leu185 traverse the membrane as a helical segment. Topologically, residues Glu186–Lys192 are extracellular. A helical transmembrane segment spans residues Met193–Asn213. At Gln214–Cys216 the chain is on the cytoplasmic side. Residues Leu217–Ile237 form a helical membrane-spanning segment. At Tyr238–Thr251 the chain is on the extracellular side. Residues Leu252–Cys272 form a helical membrane-spanning segment. Topologically, residues Ala273–Tyr283 are cytoplasmic. A helical membrane pass occupies residues Pro284 to Leu304. At Glu305–Tyr410 the chain is on the extracellular side. A helical membrane pass occupies residues Leu411–Leu431. Over Arg432–Asn439 the chain is Cytoplasmic. The chain crosses the membrane as a helical span at residues Val440 to Phe460. Residues Pro461–Ser469 lie on the Extracellular side of the membrane. The chain crosses the membrane as a helical span at residues Ile470–Met490. At Thr491 to Gln500 the chain is on the cytoplasmic side. Residues Ala501 to Ile521 form a helical membrane-spanning segment. The Extracellular portion of the chain corresponds to Thr522–Phe533. Residues Tyr534–Ile554 traverse the membrane as a helical segment. The Cytoplasmic portion of the chain corresponds to Glu555–Ala687. Disordered regions lie at residues Leu561–Ser587 and Ser654–Ala687. The span at Asp660–Ser673 shows a compositional bias: polar residues.

Belongs to the major facilitator superfamily. Sugar transporter (TC 2.A.1.1) family.

The protein localises to the membrane. In Saccharomyces cerevisiae (strain ATCC 204508 / S288c) (Baker's yeast), this protein is Putative metabolite transport protein YDL199C.